The primary structure comprises 100 residues: Urease subunit gamma (100 aa).

The protein belongs to the urease gamma subunit family. In terms of assembly, heterotrimer of UreA (gamma), UreB (beta) and UreC (alpha) subunits. Three heterotrimers associate to form the active enzyme.

It localises to the cytoplasm. It catalyses the reaction urea + 2 H2O + H(+) = hydrogencarbonate + 2 NH4(+). It participates in nitrogen metabolism; urea degradation; CO(2) and NH(3) from urea (urease route): step 1/1. This is Urease subunit gamma from Prochlorococcus marinus (strain NATL2A).